Here is a 304-residue protein sequence, read N- to C-terminus: Nod factor export ATP-binding protein I (304 aa).

An ABC transporter domain is found at 6–236 (IDLAGVKKSF…HIGCQVIEIF (231 aa)). 38 to 45 (GPNGAGKS) contacts ATP.

This sequence belongs to the ABC transporter superfamily. Lipooligosaccharide exporter (TC 3.A.1.102) family. As to quaternary structure, the complex is composed of two ATP-binding proteins (NodI) and two transmembrane proteins (NodJ).

Its subcellular location is the cell inner membrane. Part of the ABC transporter complex NodIJ involved in the export of the nodulation factors (Nod factors), the bacterial signal molecules that induce symbiosis and subsequent nodulation induction. Nod factors are LCO (lipo-chitin oligosaccharide), a modified beta-1,4-linked N-acetylglucosamine oligosaccharide. This subunit is responsible for energy coupling to the transport system. The chain is Nod factor export ATP-binding protein I from Rhizobium sp. (strain N33).